The following is a 383-amino-acid chain: 3-dehydroquinate synthase (383 aa).

NAD(+) contacts are provided by residues glutamate 81–lysine 86, glycine 115–aspartate 119, threonine 139–serine 140, lysine 152, and lysine 161. Glutamate 194, histidine 256, and histidine 274 together coordinate Zn(2+).

It belongs to the sugar phosphate cyclases superfamily. Dehydroquinate synthase family. Requires Co(2+) as cofactor. Zn(2+) is required as a cofactor. It depends on NAD(+) as a cofactor.

It is found in the cytoplasm. It catalyses the reaction 7-phospho-2-dehydro-3-deoxy-D-arabino-heptonate = 3-dehydroquinate + phosphate. It participates in metabolic intermediate biosynthesis; chorismate biosynthesis; chorismate from D-erythrose 4-phosphate and phosphoenolpyruvate: step 2/7. Catalyzes the conversion of 3-deoxy-D-arabino-heptulosonate 7-phosphate (DAHP) to dehydroquinate (DHQ). This is 3-dehydroquinate synthase from Nitrobacter hamburgensis (strain DSM 10229 / NCIMB 13809 / X14).